A 313-amino-acid polypeptide reads, in one-letter code: B3 domain-containing protein At2g31720 (313 aa).

Residues 80–110 (KNQDPEQNPNRVASSPSSCHLESKRPQKVVS) are disordered. The segment covering 84-99 (PEQNPNRVASSPSSCH) has biased composition (polar residues). Residues 169–267 (WKQILDMDFL…MLFFAFVLSD (99 aa)) constitute a DNA-binding region (TF-B3).

It localises to the nucleus. The chain is B3 domain-containing protein At2g31720 (ARF70) from Arabidopsis thaliana (Mouse-ear cress).